The following is a 596-amino-acid chain: Protein FlbA (596 aa).

4 TPR repeats span residues 91 to 124, 159 to 192, 193 to 226, and 228 to 260; these read GLAW…LPDH, VEGA…NPEA, AVLW…APDF, and KAYH…PGSP.

The chain is Protein FlbA (flbA) from Caulobacter vibrioides (strain ATCC 19089 / CIP 103742 / CB 15) (Caulobacter crescentus).